Consider the following 512-residue polypeptide: Maturase K (512 aa).

The protein belongs to the intron maturase 2 family. MatK subfamily.

The protein resides in the plastid. The protein localises to the chloroplast. Its function is as follows. Usually encoded in the trnK tRNA gene intron. Probably assists in splicing its own and other chloroplast group II introns. The chain is Maturase K from Oenothera glazioviana (Large-flowered evening primrose).